The following is a 333-amino-acid chain: Phosphate acyltransferase (333 aa).

Belongs to the PlsX family. In terms of assembly, homodimer. Probably interacts with PlsY.

It is found in the cytoplasm. The enzyme catalyses a fatty acyl-[ACP] + phosphate = an acyl phosphate + holo-[ACP]. Its pathway is lipid metabolism; phospholipid metabolism. Functionally, catalyzes the reversible formation of acyl-phosphate (acyl-PO(4)) from acyl-[acyl-carrier-protein] (acyl-ACP). This enzyme utilizes acyl-ACP as fatty acyl donor, but not acyl-CoA. In Enterococcus faecalis (strain ATCC 700802 / V583), this protein is Phosphate acyltransferase.